A 515-amino-acid chain; its full sequence is 2,3-bisphosphoglycerate-independent phosphoglycerate mutase (515 aa).

The Mn(2+) site is built by Asp14 and Ser64. Catalysis depends on Ser64, which acts as the Phosphoserine intermediate. Substrate contacts are provided by residues His125, 155 to 156, Arg187, Arg193, 263 to 266, and Lys337; these read RD and RADR. 5 residues coordinate Mn(2+): Asp404, His408, Asp445, His446, and His464.

The protein belongs to the BPG-independent phosphoglycerate mutase family. Monomer. It depends on Mn(2+) as a cofactor.

The enzyme catalyses (2R)-2-phosphoglycerate = (2R)-3-phosphoglycerate. Its pathway is carbohydrate degradation; glycolysis; pyruvate from D-glyceraldehyde 3-phosphate: step 3/5. Catalyzes the interconversion of 2-phosphoglycerate and 3-phosphoglycerate. The protein is 2,3-bisphosphoglycerate-independent phosphoglycerate mutase of Pseudomonas paraeruginosa (strain DSM 24068 / PA7) (Pseudomonas aeruginosa (strain PA7)).